Consider the following 530-residue polypeptide: Glutamate--tRNA ligase (530 aa).

The 'HIGH' region motif lies at 26–36 (PSPTGKAHIGT). Residues 267-271 (KLSKR) carry the 'KMSKS' region motif. Position 270 (Lys-270) interacts with ATP.

Belongs to the class-I aminoacyl-tRNA synthetase family. Glutamate--tRNA ligase type 1 subfamily. In terms of assembly, monomer.

It is found in the cytoplasm. The enzyme catalyses tRNA(Glu) + L-glutamate + ATP = L-glutamyl-tRNA(Glu) + AMP + diphosphate. Catalyzes the attachment of glutamate to tRNA(Glu) in a two-step reaction: glutamate is first activated by ATP to form Glu-AMP and then transferred to the acceptor end of tRNA(Glu). This Gloeobacter violaceus (strain ATCC 29082 / PCC 7421) protein is Glutamate--tRNA ligase.